Reading from the N-terminus, the 465-residue chain is Ubiquitin carboxyl-terminal hydrolase UCH54 (465 aa).

A UCH catalytic domain is found at 11-333; sequence EWCLIESNPC…VRFNIIAVMK (323 aa). Cys145 (nucleophile) is an active-site residue. His220 functions as the Proton donor in the catalytic mechanism. Positions 244-293 are disordered; the sequence is INADEQNKPNPNNNNNNKDNDNDNNNNNNNNNNNNNNNNNNNNNNNNNNI. Low complexity predominate over residues 251 to 292; it reads KPNPNNNNNNKDNDNDNNNNNNNNNNNNNNNNNNNNNNNNNN. A ULD domain is found at 432 to 460; it reads NFYPFIMSSLNLMAKHKLLKDAYQKEKLK.

Belongs to the peptidase C12 family.

The catalysed reaction is Thiol-dependent hydrolysis of ester, thioester, amide, peptide and isopeptide bonds formed by the C-terminal Gly of ubiquitin (a 76-residue protein attached to proteins as an intracellular targeting signal).. In terms of biological role, thiol protease that recognizes and hydrolyzes a peptide bond at the C-terminal glycine of either ubiquitin or NEDD8. This chain is Ubiquitin carboxyl-terminal hydrolase UCH54, found in Plasmodium falciparum (isolate 3D7).